The following is a 79-amino-acid chain: Small ribosomal subunit protein bS18 (79 aa).

This sequence belongs to the bacterial ribosomal protein bS18 family. As to quaternary structure, part of the 30S ribosomal subunit. Forms a tight heterodimer with protein bS6.

In terms of biological role, binds as a heterodimer with protein bS6 to the central domain of the 16S rRNA, where it helps stabilize the platform of the 30S subunit. This chain is Small ribosomal subunit protein bS18, found in Blochmanniella pennsylvanica (strain BPEN).